Here is a 400-residue protein sequence, read N- to C-terminus: MEILVLNLGSSSIKFKLFDMKENKPLASGLIERIGEEVGQLKIQSHLHHDKQEVKKQLFIKDHASGLLMVREHLTKMGIIKDFDKIDAIGHRVVQGGDKFHAPVLVDEKVMQEIERLSILAPLHNPVNLAGIKFVKTAHPHIPQIAVFDTAFHATMPDFAYMYALPYELYEKYQIRRYGFHGTSHHYVAKEAAKYLHIPYHKFNAITLHLGNGASVAAIKDGKSVDTSMGLTPLEGLIMGTRCGDIDPTVVEYIAQCANKSLEEVMKILNYESGLKGICGDNDARNIETRAKKGDKQAKLAFEMCAYRIKKHIGAYMVALGRVDAIIFTGGMGENYPALRESVCEGLEKLGIALHKPTNDNPGSGIVDLSQPNTKIQVLRIPTDEELEIALQTKRVLEKH.

N7 is a Mg(2+) binding site. Residue K14 coordinates ATP. R92 is a binding site for substrate. D149 serves as the catalytic Proton donor/acceptor. Residues 209–213, 283–285, and 331–335 each bind ATP; these read HLGNG, DAR, and GMGEN. Mg(2+) is bound at residue E385.

It belongs to the acetokinase family. As to quaternary structure, homodimer. Mg(2+) is required as a cofactor. The cofactor is Mn(2+).

It is found in the cytoplasm. It catalyses the reaction acetate + ATP = acetyl phosphate + ADP. It participates in metabolic intermediate biosynthesis; acetyl-CoA biosynthesis; acetyl-CoA from acetate: step 1/2. Catalyzes the formation of acetyl phosphate from acetate and ATP. Can also catalyze the reverse reaction. The chain is Acetate kinase from Helicobacter acinonychis (strain Sheeba).